We begin with the raw amino-acid sequence, 485 residues long: Hexokinase (485 aa).

Ser-15 carries the post-translational modification Phosphoserine. A Hexokinase domain is found at 21 to 468; that stretch reads ANLMEQIHGL…SGVGAAIIAC (448 aa). The hexokinase small subdomain stretch occupies residues 75–208; it reads TGKETGDFLA…NIPINVVALI (134 aa). Residue Lys-111 coordinates ATP. Residues 151–177 form a glucose-binding region; that stretch reads PLGFTFSYPASQKKINSGVLQRWTKGF. Residues 209 to 457 form a hexokinase large subdomain region; that stretch reads NDTTGTLVAS…HPIQLVAAED (249 aa).

In terms of assembly, monomer and homodimer. The monomeric form is active, the homodimeric form inactive.

The catalysed reaction is a D-hexose + ATP = a D-hexose 6-phosphate + ADP + H(+). It catalyses the reaction D-fructose + ATP = D-fructose 6-phosphate + ADP + H(+). The enzyme catalyses D-glucose + ATP = D-glucose 6-phosphate + ADP + H(+). Its pathway is carbohydrate metabolism; hexose metabolism. It participates in carbohydrate degradation; glycolysis; D-glyceraldehyde 3-phosphate and glycerone phosphate from D-glucose: step 1/4. Catalyzes the phosphorylation of hexose, such as D-glucose and D-fructose, to hexose 6-phosphate (D-glucose 6-phosphate and D-fructose 6-phosphate, respectively). Has higher affinity for D-glucose. Mediates the initial step of glycolysis by catalyzing phosphorylation of D-glucose to D-glucose 6-phosphate. The polypeptide is Hexokinase (RAG5) (Kluyveromyces lactis (strain ATCC 8585 / CBS 2359 / DSM 70799 / NBRC 1267 / NRRL Y-1140 / WM37) (Yeast)).